The sequence spans 424 residues: UDP-N-acetylglucosamine 1-carboxyvinyltransferase (424 aa).

Residue 22-23 (KN) participates in phosphoenolpyruvate binding. UDP-N-acetyl-alpha-D-glucosamine is bound at residue Arg93. Residue Cys117 is the Proton donor of the active site. Cys117 is subject to 2-(S-cysteinyl)pyruvic acid O-phosphothioketal. UDP-N-acetyl-alpha-D-glucosamine contacts are provided by residues 162–165 (KVSV), Asp307, and Ile329.

This sequence belongs to the EPSP synthase family. MurA subfamily.

The protein localises to the cytoplasm. It carries out the reaction phosphoenolpyruvate + UDP-N-acetyl-alpha-D-glucosamine = UDP-N-acetyl-3-O-(1-carboxyvinyl)-alpha-D-glucosamine + phosphate. Its pathway is cell wall biogenesis; peptidoglycan biosynthesis. Cell wall formation. Adds enolpyruvyl to UDP-N-acetylglucosamine. The chain is UDP-N-acetylglucosamine 1-carboxyvinyltransferase from Actinobacillus pleuropneumoniae serotype 7 (strain AP76).